Here is a 699-residue protein sequence, read N- to C-terminus: Polyribonucleotide nucleotidyltransferase (699 aa).

2 residues coordinate Mg(2+): Asp485 and Asp491. Residues 552–611 enclose the KH domain; it reads PRITTIKINPEKIRDVIGKGGAVIRALTEETGTTIELEDDGTVKIASSNGEATKEAIRRI. Residues 621–689 enclose the S1 motif domain; it reads GRIYNGKVIR…RQGRVRLSIK (69 aa).

This sequence belongs to the polyribonucleotide nucleotidyltransferase family. In terms of assembly, component of the RNA degradosome, which is a multiprotein complex involved in RNA processing and mRNA degradation. Mg(2+) serves as cofactor.

The protein resides in the cytoplasm. It catalyses the reaction RNA(n+1) + phosphate = RNA(n) + a ribonucleoside 5'-diphosphate. In terms of biological role, involved in mRNA degradation. Catalyzes the phosphorolysis of single-stranded polyribonucleotides processively in the 3'- to 5'-direction. In Shewanella sp. (strain MR-7), this protein is Polyribonucleotide nucleotidyltransferase.